The chain runs to 396 residues: Ribosomal RNA large subunit methyltransferase I (396 aa).

One can recognise a PUA domain in the interval 2–81 (SVRLVLAKGR…ESIDIAFFTR (80 aa)).

The protein belongs to the methyltransferase superfamily. RlmI family.

The protein localises to the cytoplasm. The catalysed reaction is cytidine(1962) in 23S rRNA + S-adenosyl-L-methionine = 5-methylcytidine(1962) in 23S rRNA + S-adenosyl-L-homocysteine + H(+). Specifically methylates the cytosine at position 1962 (m5C1962) of 23S rRNA. The protein is Ribosomal RNA large subunit methyltransferase I of Escherichia coli O1:K1 / APEC.